A 39-amino-acid chain; its full sequence is Natriuretic peptide TcNPa (39 aa).

Residues 1–8 constitute a propeptide that is removed on maturation; the sequence is SGSETAKI. Cys-12 and Cys-28 are oxidised to a cystine. Residue Thr-35 is glycosylated (O-linked (GalNAc...) threonine).

The protein belongs to the natriuretic peptide family. Post-translationally, O-linked glycans consist of galactosyl-beta(1-3)-N-acetylgalactosamine (Gal-GalNAc). The synthetic non-glycosylated form shows higher potency on natriuretic receptors (EC(50)=672.90 nM) and NPR2 (EC(50)=261.0 nM). As to expression, expressed by the venom gland.

It is found in the secreted. Functionally, snake venom natriuretic peptide that targets both NPR1 (EC(50)=1080.0 nM) and NPR2 (EC(50)=328.60 nM). Exhibits hypotensive and vasodepressor activities. The protein is Natriuretic peptide TcNPa of Tropidechis carinatus (Australian rough-scaled snake).